Consider the following 34-residue polypeptide: Protamine-Z1/Z2 (34 aa).

The tract at residues 1–34 (PRRRRRSSRPVRRRRRYRRSTVARRRRRVVRRRR) is disordered.

As to expression, testis.

It is found in the nucleus. It localises to the chromosome. Its function is as follows. Protamines substitute for histones in the chromatin of sperm during the haploid phase of spermatogenesis. They compact sperm DNA into a highly condensed, stable and inactive complex. In Thunnus thynnus (Atlantic bluefin tuna), this protein is Protamine-Z1/Z2.